The following is a 161-amino-acid chain: Allophycocyanin beta chain (161 aa).

Asparagine 71 bears the N4-methylasparagine mark. Position 81 (cysteine 81) interacts with (2R,3E)-phycocyanobilin.

The protein belongs to the phycobiliprotein family. As to quaternary structure, heterodimer of an alpha and a beta chain. Contains one covalently linked phycocyanobilin chromophore.

It localises to the cellular thylakoid membrane. Its function is as follows. Light-harvesting photosynthetic bile pigment-protein from the phycobiliprotein complex. Allophycocyanin has a maximum absorption at approximately 650 nanometers. In Synechocystis sp. (strain PCC 6714) (Aphanocapsa sp. (strain PCC 6714)), this protein is Allophycocyanin beta chain (apcB).